A 181-amino-acid chain; its full sequence is Putative manganese efflux pump MntP (181 aa).

The next 6 membrane-spanning stretches (helical) occupy residues 3–23 (LIFL…ANGA), 42–62 (IFQA…VGFI), 63–83 (SYID…KMIK), 101–121 (LMLG…TFSF), 124–144 (INIA…CVIA), and 160–180 (LVLG…THLI).

Belongs to the MntP (TC 9.B.29) family.

The protein resides in the cell inner membrane. Its function is as follows. Probably functions as a manganese efflux pump. The chain is Putative manganese efflux pump MntP from Campylobacter fetus subsp. fetus (strain 82-40).